The primary structure comprises 548 residues: Asparagine--tRNA ligase, cytoplasmic (548 aa).

Residues 1 to 25 are disordered; that stretch reads MVLAELYVSDREGSDATGDGTKEKP. Basic and acidic residues predominate over residues 8-25; the sequence is VSDREGSDATGDGTKEKP. Position 61 is a phosphoserine (Ser-61). Positions 69 to 91 are disordered; it reads MWHREQMKSESREKKEAEDSLRR. The span at 71 to 91 shows a compositional bias: basic and acidic residues; that stretch reads HREQMKSESREKKEAEDSLRR. Lys-244 bears the N6-acetyllysine mark. Ser-482 bears the Phosphoserine mark. Lys-490 is modified (N6-acetyllysine).

Belongs to the class-II aminoacyl-tRNA synthetase family. In terms of assembly, homodimer.

The protein resides in the cytoplasm. It carries out the reaction tRNA(Asn) + L-asparagine + ATP = L-asparaginyl-tRNA(Asn) + AMP + diphosphate + H(+). Its function is as follows. Catalyzes the attachment of asparagine to tRNA(Asn) in a two-step reaction: asparagine is first activated by ATP to form Asn-AMP and then transferred to the acceptor end of tRNA(Asn). In addition to its essential role in protein synthesis, acts as a signaling molecule that induced migration of CCR3-expressing cells. Has an essential role in the development of the cerebral cortex, being required for proper proliferation of radial glial cells. This Homo sapiens (Human) protein is Asparagine--tRNA ligase, cytoplasmic.